The primary structure comprises 221 residues: ATP-dependent dethiobiotin synthetase BioD (221 aa).

13 to 18 (DIGKTY) is an ATP binding site. A Mg(2+)-binding site is contributed by T17. The active site involves K38. S42 is a substrate binding site. Residues D51, 112 to 115 (EGSG), and 176 to 177 (NR) each bind ATP. Mg(2+) is bound by residues D51 and E112.

This sequence belongs to the dethiobiotin synthetase family. As to quaternary structure, homodimer. Mg(2+) serves as cofactor.

The protein resides in the cytoplasm. The catalysed reaction is (7R,8S)-7,8-diammoniononanoate + CO2 + ATP = (4R,5S)-dethiobiotin + ADP + phosphate + 3 H(+). It functions in the pathway cofactor biosynthesis; biotin biosynthesis; biotin from 7,8-diaminononanoate: step 1/2. Catalyzes a mechanistically unusual reaction, the ATP-dependent insertion of CO2 between the N7 and N8 nitrogen atoms of 7,8-diaminopelargonic acid (DAPA, also called 7,8-diammoniononanoate) to form a ureido ring. This is ATP-dependent dethiobiotin synthetase BioD from Brachyspira hyodysenteriae (strain ATCC 49526 / WA1).